The following is a 133-amino-acid chain: MSRKIIPALTIFFGPILILTAITQFVQKDEEKDLKEFKKNQPANYQSNKENNAQIMKFIRDSAKGDRIDFFAGLEEEMKTIESIKNQNSLNKEKQQQQQQQQQQQQQQQQQQQQQQKPNTPPTPLTTPSTPKK.

A signal peptide spans 1-23; the sequence is MSRKIIPALTIFFGPILILTAIT. A disordered region spans residues 82 to 133; it reads ESIKNQNSLNKEKQQQQQQQQQQQQQQQQQQQQQQKPNTPPTPLTTPSTPKK. A compositionally biased stretch (low complexity) spans 96-118; that stretch reads QQQQQQQQQQQQQQQQQQQQQKP.

Its subcellular location is the secreted. This is an uncharacterized protein from Dictyostelium discoideum (Social amoeba).